The following is an 829-amino-acid chain: MAELENRKQFAQMLAPGVKTLKLHPDYKVRRKKNEKTGQSYIDKIALQLGVSPNTIKSWIGQMGANYIPGRIDDGKLFGMIWIILEKTDLDIEWLTDLLEATTIPVIKPALPVWAASCLKKAKILRKDGLFGAPSEGEIENVVKRLFHDRPGQETNALTEQPITHNLPSRWSGRFIGRSFDMEAIRQWMLSPSPVCLITGWAGMGKTTIALEAAYSCVDDTSVWPAFNSIIWVSADWKGLSFSDFLNTIAYQLGRKEQIDKSINVKRFVVRNALANYTREKPILLIVDSIDTAERDIHEFITSLPQGVKVLLTARENVKQTYRESFGEMTAIQLSGLDQTDAHEFFQQEVHHCLQTCNLPRKREKLEQLLHLSSDLKNEFISATAGNPKAMALSIAYMSDDDIPAQQLIHELGKAGYSLLELFEFLFGRTWDRCNEDTRKLWQTLCFFSKPPDEKSLAAAAGLDARRFHYAMEQMRSYALIQPERSQGRTQYLAHQTVVAYGEQHLSEQHEYEKEARNRWAHYYIDYAETHLKREQPNSIYWSYLLGRNLDQMKQEWPNILKVIQWASETEQKEILIELITRISHFLSRINLPLRIEYGRKAADAAHHLGQHTREAYFRIDTSGWALMEVNDLDGALQQIEAGLKILEQSDAHDAYDLKVWGHALKARLFLKDGQQEKAETILNEIENQPISPTIQHRVLLVRGDLSFARGYHVEAIQLYEAANEISSTYGGEKTIEAYFNLGVAYVKCDQFEKAEEAFEQMLYDKHNANQVELIYYHYGMAQLLYRKGEKTKAVESNQKAIRLIDSWEPAIGIRGEVERLARATKENE.

Positions 42–61 (IDKIALQLGVSPNTIKSWIG) form a DNA-binding region, H-T-H motif. Residue 200–207 (GWAGMGKT) coordinates ATP. TPR repeat units lie at residues 697 to 730 (HRVL…SSTY), 736 to 769 (IEAY…KHNA), and 775 to 808 (IYYH…IDSW).

Activator of the glucitol dehydrogenase gene (gutB). The polypeptide is Transcription activator GutR (gutR) (Bacillus subtilis (strain 168)).